The sequence spans 308 residues: Homoserine O-acetyltransferase (308 aa).

The Acyl-thioester intermediate role is filled by C142. Residues K163 and S192 each contribute to the substrate site. H235 acts as the Proton acceptor in catalysis. The active site involves E237. R249 provides a ligand contact to substrate.

This sequence belongs to the MetA family.

Its subcellular location is the cytoplasm. It carries out the reaction L-homoserine + acetyl-CoA = O-acetyl-L-homoserine + CoA. Its pathway is amino-acid biosynthesis; L-methionine biosynthesis via de novo pathway; O-acetyl-L-homoserine from L-homoserine: step 1/1. Its function is as follows. Transfers an acetyl group from acetyl-CoA to L-homoserine, forming acetyl-L-homoserine. The polypeptide is Homoserine O-acetyltransferase (Agrobacterium fabrum (strain C58 / ATCC 33970) (Agrobacterium tumefaciens (strain C58))).